A 38-amino-acid polypeptide reads, in one-letter code: Large ribosomal subunit protein bL36 (38 aa).

It belongs to the bacterial ribosomal protein bL36 family.

This is Large ribosomal subunit protein bL36 from Mycoplasma mobile (strain ATCC 43663 / 163K / NCTC 11711) (Mesomycoplasma mobile).